The following is a 288-amino-acid chain: ATP synthase gamma chain (288 aa).

It belongs to the ATPase gamma chain family. F-type ATPases have 2 components, CF(1) - the catalytic core - and CF(0) - the membrane proton channel. CF(1) has five subunits: alpha(3), beta(3), gamma(1), delta(1), epsilon(1). CF(0) has three main subunits: a, b and c.

It is found in the cell membrane. Produces ATP from ADP in the presence of a proton gradient across the membrane. The gamma chain is believed to be important in regulating ATPase activity and the flow of protons through the CF(0) complex. In Staphylococcus aureus (strain Mu3 / ATCC 700698), this protein is ATP synthase gamma chain.